Consider the following 171-residue polypeptide: Large ribosomal subunit protein bL9 (171 aa).

This sequence belongs to the bacterial ribosomal protein bL9 family.

Functionally, binds to the 23S rRNA. The polypeptide is Large ribosomal subunit protein bL9 (Rickettsia rickettsii (strain Iowa)).